A 266-amino-acid chain; its full sequence is Small ribosomal subunit protein uS3 (266 aa).

A KH type-2 domain is found at 39–107 (VREYLKKKLK…PVHVNIEEIR (69 aa)). The tract at residues 218 to 266 (EVAEDKRPRRNARPGDRRPRRDGEGGAPGARRGAPRRGAGKPEDGKTGE) is disordered. 2 stretches are compositionally biased toward basic and acidic residues: residues 230–241 (RPGDRRPRRDGE) and 257–266 (GKPEDGKTGE).

Belongs to the universal ribosomal protein uS3 family. Part of the 30S ribosomal subunit. Forms a tight complex with proteins S10 and S14.

Its function is as follows. Binds the lower part of the 30S subunit head. Binds mRNA in the 70S ribosome, positioning it for translation. This Burkholderia multivorans (strain ATCC 17616 / 249) protein is Small ribosomal subunit protein uS3.